The sequence spans 73 residues: Gastricsin (73 aa).

Residues 1–43 (SVIKVPLKKLKSIRQAMKEKGLLEEFLKTHKYDPAQRYRIGDI) constitute a propeptide, activation peptide. The Peptidase A1 domain occupies 57–73 (YFGEISIGTPPQNFLVL).

The protein belongs to the peptidase A1 family.

The protein localises to the secreted. It carries out the reaction More restricted specificity than pepsin A, but shows preferential cleavage at Tyr-|-Xaa bonds. High activity on hemoglobin.. Its function is as follows. Hydrolyzes a variety of proteins. The sequence is that of Gastricsin (PGC) from Sus scrofa (Pig).